Here is a 395-residue protein sequence, read N- to C-terminus: Chaperone protein DnaJ (395 aa).

Residues 4 to 69 (DYYEVLGLSR…DKRRRYDQFG (66 aa)) form the J domain. Residues 151–232 (GVEKTLKIKK…CYGEGIKQGE (82 aa)) form a CR-type zinc finger. Cys164, Cys167, Cys180, Cys183, Cys206, Cys209, Cys220, and Cys223 together coordinate Zn(2+). CXXCXGXG motif repeat units follow at residues 164 to 171 (CTECNGTG), 180 to 187 (CPTCHGSG), 206 to 213 (CPTCGGEG), and 220 to 227 (CVSCYGEG).

Belongs to the DnaJ family. In terms of assembly, homodimer. Zn(2+) serves as cofactor.

The protein localises to the cytoplasm. Participates actively in the response to hyperosmotic and heat shock by preventing the aggregation of stress-denatured proteins and by disaggregating proteins, also in an autonomous, DnaK-independent fashion. Unfolded proteins bind initially to DnaJ; upon interaction with the DnaJ-bound protein, DnaK hydrolyzes its bound ATP, resulting in the formation of a stable complex. GrpE releases ADP from DnaK; ATP binding to DnaK triggers the release of the substrate protein, thus completing the reaction cycle. Several rounds of ATP-dependent interactions between DnaJ, DnaK and GrpE are required for fully efficient folding. Also involved, together with DnaK and GrpE, in the DNA replication of plasmids through activation of initiation proteins. This is Chaperone protein DnaJ from Chlorobium phaeobacteroides (strain DSM 266 / SMG 266 / 2430).